Reading from the N-terminus, the 409-residue chain is Nucleoprotein (409 aa).

4 disordered regions span residues 1-32 (MASG…SSGN), 44-63 (LNSP…ENLK), 120-145 (GADT…LRFS), and 164-193 (RSGR…SGAE). Low complexity predominate over residues 15-31 (PVIKLGGPKPPKVGSSG). Residues 29–160 (SSGNASWFQA…GNFRWDFIPI (132 aa)) form an RNA-binding region. The region spanning 31 to 156 (GNASWFQALK…GGPDGNFRWD (126 aa)) is the CoV N NTD domain. Residues 164-179 (RSGRSTAASSAASSRA) are compositionally biased toward low complexity. Residues 180–192 (PSRDGSRGRRSGA) show a composition bias toward basic and acidic residues. S190 is subject to Phosphoserine; by host. Residues 215 to 331 (TKAKADEMAH…QCVDGVGTRP (117 aa)) form the CoV N CTD domain. The dimerization stretch occupies residues 226–333 (RYCKRTIPPG…VDGVGTRPKD (108 aa)). C320 and C323 are oxidised to a cystine. The tract at residues 326-409 (GVGTRPKDDE…GDSALGENEL (84 aa)) is disordered. Residues 341–355 (RPNSRPATRTSSPAP) are compositionally biased toward polar residues. Positions 358–367 (QRQKKEKKSK) are enriched in basic residues. The segment covering 368–384 (KQDDEVDKALTSDEERN) has biased composition (basic and acidic residues). T378 carries the phosphothreonine; by host modification. S379 carries the phosphoserine; by host modification.

It belongs to the gammacoronavirus nucleocapsid protein family. In terms of assembly, homooligomer. Both monomeric and oligomeric forms interact with RNA. Interacts with protein M. Interacts with NSP3; this interaction serves to tether the genome to the newly translated replicase-transcriptase complex at a very early stage of infection. Post-translationally, ADP-ribosylated. The ADP-ribosylation is retained in the virion during infection. Phosphorylated on serine and threonine residues.

Its subcellular location is the virion. It is found in the host endoplasmic reticulum-Golgi intermediate compartment. The protein localises to the host Golgi apparatus. In terms of biological role, packages the positive strand viral genome RNA into a helical ribonucleocapsid (RNP) and plays a fundamental role during virion assembly through its interactions with the viral genome and membrane protein M. Plays an important role in enhancing the efficiency of subgenomic viral RNA transcription as well as viral replication. The protein is Nucleoprotein of Avian infectious bronchitis virus (strain H120) (IBV).